Consider the following 137-residue polypeptide: Ribonuclease VapC51 (137 aa).

One can recognise a PINc domain in the interval 5–120 (YLLDTSVIKR…HYDADFDLIA (116 aa)). Residues D8 and D95 each contribute to the Mg(2+) site.

The protein belongs to the PINc/VapC protein family. The cofactor is Mg(2+).

Functionally, toxic component of a type II toxin-antitoxin (TA) system. An RNase. Its cognate antitoxin is VapB51. The protein is Ribonuclease VapC51 of Mycobacterium tuberculosis (strain ATCC 25618 / H37Rv).